The chain runs to 517 residues: MTQANRVIIFDTTLRDGEQSPGAAMTKEEKIRVARQLEKLGVDIIEAGFAAASPGDFEAVNAIAKTITKSTVCSLSRAIERDIRQAGEAVAPAPKKRIHTFIATSPIHMEYKLKMKPKQVIEAAVKAVKIAREYTDDVEFSCEDALRSEIDFLAEICGAVIEAGATTINIPDTVGYSIPYKTEEFFRELIVKTPNGGKVVWSAHCHNDLGLAVANSLAALKGGARQVECTVNGLGERAGNASVEEIVMALKVRHDLFGLETGIDTTQIVPSSKLVSTITGYPVQPNKAIVGANAFSHESGIHQDGVLKHRETYEIMSAESVGWATNRLSLGKLSGRNAFKTKLADLGIELESEEALNAAFARFKELADKKREIFDEDLHALVSDEMGSMNAESYKFISQKISTETGEEPRADIVFSIKGEEKRASATGSGPVDAIFKAIESVAQSGAALQIYSVNAVTQGTESQGETSVRLARGNRVVNGQGADTDVLVATAKAYLSALSKLEFGSAKPKAQGSGTI.

Positions 7–269 (VIIFDTTLRD…ETGIDTTQIV (263 aa)) constitute a Pyruvate carboxyltransferase domain. Mn(2+) contacts are provided by Asp-16, His-204, His-206, and Asn-240. Positions 395 to 517 (KFISQKISTE…KPKAQGSGTI (123 aa)) are regulatory domain.

Belongs to the alpha-IPM synthase/homocitrate synthase family. LeuA type 1 subfamily. In terms of assembly, homodimer. The cofactor is Mn(2+).

The protein localises to the cytoplasm. The catalysed reaction is 3-methyl-2-oxobutanoate + acetyl-CoA + H2O = (2S)-2-isopropylmalate + CoA + H(+). It functions in the pathway amino-acid biosynthesis; L-leucine biosynthesis; L-leucine from 3-methyl-2-oxobutanoate: step 1/4. In terms of biological role, catalyzes the condensation of the acetyl group of acetyl-CoA with 3-methyl-2-oxobutanoate (2-ketoisovalerate) to form 3-carboxy-3-hydroxy-4-methylpentanoate (2-isopropylmalate). The chain is 2-isopropylmalate synthase from Neisseria meningitidis serogroup A / serotype 4A (strain DSM 15465 / Z2491).